The primary structure comprises 125 residues: Small ribosomal subunit protein uS13 (125 aa).

It belongs to the universal ribosomal protein uS13 family. As to quaternary structure, part of the 30S ribosomal subunit. Forms a loose heterodimer with protein S19. Forms two bridges to the 50S subunit in the 70S ribosome.

Its function is as follows. Located at the top of the head of the 30S subunit, it contacts several helices of the 16S rRNA. In the 70S ribosome it contacts the 23S rRNA (bridge B1a) and protein L5 of the 50S subunit (bridge B1b), connecting the 2 subunits; these bridges are implicated in subunit movement. Contacts the tRNAs in the A and P-sites. This chain is Small ribosomal subunit protein uS13, found in Orientia tsutsugamushi (strain Boryong) (Rickettsia tsutsugamushi).